Reading from the N-terminus, the 335-residue chain is Biotin synthase (335 aa).

Positions 46–274 constitute a Radical SAM core domain; the sequence is YDIQLASLFS…KSKIRLSAGR (229 aa). [4Fe-4S] cluster-binding residues include cysteine 61, cysteine 65, and cysteine 68. [2Fe-2S] cluster is bound by residues cysteine 105, cysteine 137, cysteine 197, and arginine 269.

Belongs to the radical SAM superfamily. Biotin synthase family. As to quaternary structure, homodimer. [4Fe-4S] cluster serves as cofactor. [2Fe-2S] cluster is required as a cofactor.

The enzyme catalyses (4R,5S)-dethiobiotin + (sulfur carrier)-SH + 2 reduced [2Fe-2S]-[ferredoxin] + 2 S-adenosyl-L-methionine = (sulfur carrier)-H + biotin + 2 5'-deoxyadenosine + 2 L-methionine + 2 oxidized [2Fe-2S]-[ferredoxin]. Its pathway is cofactor biosynthesis; biotin biosynthesis; biotin from 7,8-diaminononanoate: step 2/2. Functionally, catalyzes the conversion of dethiobiotin (DTB) to biotin by the insertion of a sulfur atom into dethiobiotin via a radical-based mechanism. The protein is Biotin synthase of Prochlorococcus marinus (strain MIT 9215).